Consider the following 140-residue polypeptide: PDZ domain-containing protein 11 (140 aa).

A PDZ domain is found at 47–129 (IVTLKKPPGA…ISMRVRFFPY (83 aa)).

In terms of assembly, interacts with ATP2B1, ATP2B2, ATP2B3, ATP2B4 and ATP7A. Interacts with PLEKHA7 (via WW domains) at zonula adherens; this interaction is essential for the interaction between PLEKHA7 and the ADAM10-binding protein TSPAN33. Interacts with SLC5A6.

It localises to the cytoplasm. The protein resides in the cell junction. It is found in the adherens junction. The protein localises to the cell membrane. Functionally, mediates docking of ADAM10 to zonula adherens by interacting with PLEKHA7 which is required for PLEKHA7 to interact with the ADAM10-binding protein TSPAN33. The protein is PDZ domain-containing protein 11 (Pdzd11) of Mus musculus (Mouse).